A 135-amino-acid polypeptide reads, in one-letter code: MNRVKSREYLLQLAYQMEITSETALETFNSFMENEDISKDDLDLAYIKSGLLGIEENKEKLDSLIESQLVKWKLNRISKVNLSILRISTYEILFAEDVPGKVSINEAIELCKKYSDNKSVSFINGVLDKVYKNMQ.

This sequence belongs to the NusB family.

Functionally, involved in transcription antitermination. Required for transcription of ribosomal RNA (rRNA) genes. Binds specifically to the boxA antiterminator sequence of the ribosomal RNA (rrn) operons. This is Transcription antitermination protein NusB from Clostridium perfringens (strain ATCC 13124 / DSM 756 / JCM 1290 / NCIMB 6125 / NCTC 8237 / Type A).